We begin with the raw amino-acid sequence, 366 residues long: 3-dehydroquinate synthase (366 aa).

Residues 69 to 74, 103 to 107, 127 to 128, Lys-140, and Lys-149 each bind NAD(+); these read DGEAYK, GVIGD, and TT. Residues Glu-182, His-245, and His-262 each coordinate Zn(2+).

The protein belongs to the sugar phosphate cyclases superfamily. Dehydroquinate synthase family. The cofactor is Co(2+). Zn(2+) is required as a cofactor. NAD(+) serves as cofactor.

Its subcellular location is the cytoplasm. It carries out the reaction 7-phospho-2-dehydro-3-deoxy-D-arabino-heptonate = 3-dehydroquinate + phosphate. It functions in the pathway metabolic intermediate biosynthesis; chorismate biosynthesis; chorismate from D-erythrose 4-phosphate and phosphoenolpyruvate: step 2/7. Catalyzes the conversion of 3-deoxy-D-arabino-heptulosonate 7-phosphate (DAHP) to dehydroquinate (DHQ). The chain is 3-dehydroquinate synthase from Pseudomonas fluorescens (strain ATCC BAA-477 / NRRL B-23932 / Pf-5).